The sequence spans 499 residues: Glycerol kinase (499 aa).

Residue Thr-14 coordinates ADP. Thr-14, Thr-15, and Ser-16 together coordinate ATP. Thr-14 contacts sn-glycerol 3-phosphate. Arg-18 is an ADP binding site. Positions 84, 85, 136, and 245 each coordinate sn-glycerol 3-phosphate. 5 residues coordinate glycerol: Arg-84, Glu-85, Tyr-136, Asp-245, and Gln-246. ADP contacts are provided by Thr-267 and Gly-310. Residues Thr-267, Gly-310, Gln-314, and Gly-411 each coordinate ATP. ADP is bound by residues Gly-411 and Asn-415.

This sequence belongs to the FGGY kinase family.

It carries out the reaction glycerol + ATP = sn-glycerol 3-phosphate + ADP + H(+). It participates in polyol metabolism; glycerol degradation via glycerol kinase pathway; sn-glycerol 3-phosphate from glycerol: step 1/1. Its activity is regulated as follows. Inhibited by fructose 1,6-bisphosphate (FBP). Its function is as follows. Key enzyme in the regulation of glycerol uptake and metabolism. Catalyzes the phosphorylation of glycerol to yield sn-glycerol 3-phosphate. This chain is Glycerol kinase, found in Nitrosomonas eutropha (strain DSM 101675 / C91 / Nm57).